We begin with the raw amino-acid sequence, 373 residues long: NK1 transcription factor-related protein 1 (373 aa).

Disordered stretches follow at residues 49-74 (ALPA…TVHR), 149-231 (SDFT…RRAR), and 281-328 (KWKK…SMHT). A compositionally biased stretch (basic and acidic residues) spans 53–63 (ESRETSPRHEP). A compositionally biased stretch (polar residues) spans 168 to 177 (EESSALTGNN). The span at 196–210 (GQQTQQSSSNGQNHQ) shows a compositional bias: low complexity. A DNA-binding region (homeobox) is located at residues 227–286 (PRRARTAFTYEQLVALENKFKSTRYLSVCERLNLALSLSLTETQVKIWFQNRRTKWKKQN). The segment covering 296 to 310 (SGGGGGNGPSNGLGG) has biased composition (gly residues).

This sequence belongs to the NK-1 homeobox family.

It is found in the nucleus. In terms of biological role, may participate in the energy homeostasis regulation. This is NK1 transcription factor-related protein 1 from Danio rerio (Zebrafish).